A 131-amino-acid polypeptide reads, in one-letter code: Jacalin-related lectin 15 (131 aa).

The region spanning 1–126 is the Jacalin-type lectin domain; that stretch reads MSTPSGSNPL…LTSLGAYFAP (126 aa).

This sequence belongs to the jacalin lectin family. Expressed in the vascular and surrounding tissues in cotyledons. Detected in root apical meristems.

This chain is Jacalin-related lectin 15 (JAL15), found in Arabidopsis thaliana (Mouse-ear cress).